The chain runs to 372 residues: tRNA pseudouridine synthase D (372 aa).

D85 functions as the Nucleophile in the catalytic mechanism. The TRUD domain occupies 160–330; sequence GFANYFGYQR…MQGSRRFMWG (171 aa).

Belongs to the pseudouridine synthase TruD family.

It catalyses the reaction uridine(13) in tRNA = pseudouridine(13) in tRNA. In terms of biological role, responsible for synthesis of pseudouridine from uracil-13 in transfer RNAs. The polypeptide is tRNA pseudouridine synthase D (Campylobacter jejuni subsp. jejuni serotype O:6 (strain 81116 / NCTC 11828)).